A 392-amino-acid polypeptide reads, in one-letter code: Phosphoglycerate kinase (392 aa).

Substrate is bound by residues Asp21–Asn23, Arg36, His59–Arg62, Arg118, and Arg151. ATP contacts are provided by residues Lys201, Gly292, Glu323, and Gly349–Ser352.

The protein belongs to the phosphoglycerate kinase family. In terms of assembly, monomer.

The protein localises to the cytoplasm. It catalyses the reaction (2R)-3-phosphoglycerate + ATP = (2R)-3-phospho-glyceroyl phosphate + ADP. Its pathway is carbohydrate degradation; glycolysis; pyruvate from D-glyceraldehyde 3-phosphate: step 2/5. The protein is Phosphoglycerate kinase of Borrelia duttonii (strain Ly).